The sequence spans 326 residues: Undecaprenyl-phosphate 4-deoxy-4-formamido-L-arabinose transferase (326 aa).

2 consecutive transmembrane segments (helical) span residues 234 to 254 (LLSI…ILLI) and 269 to 289 (VFTL…GMGL).

This sequence belongs to the glycosyltransferase 2 family.

The protein resides in the cell inner membrane. It carries out the reaction UDP-4-deoxy-4-formamido-beta-L-arabinose + di-trans,octa-cis-undecaprenyl phosphate = 4-deoxy-4-formamido-alpha-L-arabinopyranosyl di-trans,octa-cis-undecaprenyl phosphate + UDP. The protein operates within glycolipid biosynthesis; 4-amino-4-deoxy-alpha-L-arabinose undecaprenyl phosphate biosynthesis; 4-amino-4-deoxy-alpha-L-arabinose undecaprenyl phosphate from UDP-4-deoxy-4-formamido-beta-L-arabinose and undecaprenyl phosphate: step 1/2. It participates in bacterial outer membrane biogenesis; lipopolysaccharide biosynthesis. Its function is as follows. Catalyzes the transfer of 4-deoxy-4-formamido-L-arabinose from UDP to undecaprenyl phosphate. The modified arabinose is attached to lipid A and is required for resistance to polymyxin and cationic antimicrobial peptides. The polypeptide is Undecaprenyl-phosphate 4-deoxy-4-formamido-L-arabinose transferase (Aeromonas hydrophila subsp. hydrophila (strain ATCC 7966 / DSM 30187 / BCRC 13018 / CCUG 14551 / JCM 1027 / KCTC 2358 / NCIMB 9240 / NCTC 8049)).